Reading from the N-terminus, the 718-residue chain is ATP-dependent RNA helicase homolog DQX1 (718 aa).

A Helicase ATP-binding domain is found at 54 to 222 (HLESSPTGVV…WGNSPIVRVP (169 aa)). 67–74 (GDPGSGKS) lines the ATP pocket. The DEAQ box signature appears at 167–170 (DEAQ). The region spanning 245-447 (ACQAVLELCQ…ALMRALEDLD (203 aa)) is the Helicase C-terminal domain. The disordered stretch occupies residues 690-718 (QLREGTAEPPAAATETSSPQEYGDGCVLQ). Residues 696-708 (AEPPAAATETSSP) are compositionally biased toward low complexity.

Ubiquitous.

Its subcellular location is the nucleus. Might be involved in RNA metabolism; it is missing helicase motif III and may not have helicase activity. This Mus musculus (Mouse) protein is ATP-dependent RNA helicase homolog DQX1 (Dqx1).